A 714-amino-acid chain; its full sequence is Mitochondrial division protein 1 (714 aa).

Positions 240 to 298 (LNIQKNSTLSEIRDIEVEVENLRQKKEKLLGKIANIEQNQLLLEDNLKQIDDRLDFLEE) form a coiled coil. Residues 323-354 (LKNDAIRNEGVTTESISSEASNLPPRRRQQLR) form a disordered region. Over residues 332–343 (GVTTESISSEAS) the composition is skewed to polar residues. A Phosphoserine modification is found at serine 376. WD repeat units follow at residues 396 to 436 (THDD…KIGE), 439 to 478 (GHLA…QLYQ), 500 to 539 (AHTD…QTID), 561 to 603 (TQRN…RTLK), 604 to 642 (GHTD…NKFH), 644 to 681 (YSAP…SWSC), and 685 to 714 (GNET…IWAV).

Belongs to the WD repeat MDV1/CAF4 family. Interacts with CAF4, DNM1 and FIS1, components of the mitochondrial fission machinery. Interacts via its N-terminal, coiled-coil extension (NTE) with FIS1, and via its WD repeats with DNM1.

The protein localises to the mitochondrion outer membrane. Its function is as follows. Involved in mitochondrial fission. Has a partially redundant function to CAF4 in acting as an adapter protein, binding to FIS1 on the mitochondrial outer membrane and recruiting the dynamin-like GTPase DNM1 to form mitochondrial fission complexes. Formation of these complexes is required to promote constriction and fission of the mitochondrial compartment at a late step in mitochondrial division. The polypeptide is Mitochondrial division protein 1 (MDV1) (Saccharomyces cerevisiae (strain YJM789) (Baker's yeast)).